Consider the following 114-residue polypeptide: Large ribosomal subunit protein uL18 (114 aa).

Belongs to the universal ribosomal protein uL18 family. Part of the 50S ribosomal subunit; part of the 5S rRNA/L5/L18/L25 subcomplex. Contacts the 5S and 23S rRNAs.

Functionally, this is one of the proteins that bind and probably mediate the attachment of the 5S RNA into the large ribosomal subunit, where it forms part of the central protuberance. This Azobacteroides pseudotrichonymphae genomovar. CFP2 protein is Large ribosomal subunit protein uL18.